The chain runs to 174 residues: Small ribosomal subunit protein uS5 (174 aa).

Residues 18–81 (LKDRLVSVNR…EDAKKNLVKI (64 aa)) enclose the S5 DRBM domain.

It belongs to the universal ribosomal protein uS5 family. In terms of assembly, part of the 30S ribosomal subunit. Contacts proteins S4 and S8.

Functionally, with S4 and S12 plays an important role in translational accuracy. Located at the back of the 30S subunit body where it stabilizes the conformation of the head with respect to the body. The sequence is that of Small ribosomal subunit protein uS5 from Flavobacterium psychrophilum (strain ATCC 49511 / DSM 21280 / CIP 103535 / JIP02/86).